A 198-amino-acid polypeptide reads, in one-letter code: Imidazoleglycerol-phosphate dehydratase (198 aa).

It belongs to the imidazoleglycerol-phosphate dehydratase family.

Its subcellular location is the cytoplasm. It catalyses the reaction D-erythro-1-(imidazol-4-yl)glycerol 3-phosphate = 3-(imidazol-4-yl)-2-oxopropyl phosphate + H2O. Its pathway is amino-acid biosynthesis; L-histidine biosynthesis; L-histidine from 5-phospho-alpha-D-ribose 1-diphosphate: step 6/9. The protein is Imidazoleglycerol-phosphate dehydratase of Magnetococcus marinus (strain ATCC BAA-1437 / JCM 17883 / MC-1).